Consider the following 412-residue polypeptide: Peptidyl-prolyl cis-trans isomerase FKBP8 (412 aa).

Positions 1–68 (MASCAEPSEP…GQPPAEEAEQ (68 aa)) are disordered. Residues 22–50 (EDFEVLDGVEDAEGEEEEEEEEEEEDDLS) are compositionally biased toward acidic residues. The PPIase FKBP-type domain maps to 120–204 (GQVVTVHLQT…CLEVTLKTAV (85 aa)). Ca(2+)-binding residues include aspartate 149 and aspartate 151. Residues 221 to 254 (ANRKRECGNAHYQRADFVLAANSYDLAIKAITSS) form a TPR 1 repeat. Glycyl lysine isopeptide (Lys-Gly) (interchain with G-Cter in ubiquitin) cross-links involve residues lysine 249, lysine 271, lysine 273, and lysine 284. TPR repeat units follow at residues 272-305 (VKCLNNLAASQLKLDHYRAALRSCSLVLEHQPDN) and 306-339 (IKALFRKGKVLAQQGEYSEAIPILRAALKLEPSN). At serine 296 the chain carries Phosphoserine. Glycyl lysine isopeptide (Lys-Gly) (interchain with G-Cter in ubiquitin) cross-links involve residues lysine 307, lysine 314, lysine 334, lysine 340, lysine 348, lysine 351, and lysine 352. Residues 390 to 410 (WLFGATAVALGGVALSVVIAA) traverse the membrane as a helical segment.

Homomultimers or heteromultimers (Potential). Forms heterodimer with calmodulin. When activated by calmodulin and calcium, interacts with the BH4 domain of BCL2 and weakly with BCL2L1/BCLX isoform Bcl-X(L). Does not bind and inhibit calcineurin. Interacts with ZFYVE27; may negatively regulate ZFYVE27 phosphorylation. In terms of assembly, (Microbial infection) Interacts with hepatitis C/HCV protein NS5A. Ca(2+) serves as cofactor. In terms of processing, ubiquitinated by PRKN during mitophagy, leading to its degradation and enhancement of mitophagy. Deubiquitinated by USP30. Widely expressed. Highest levels seen in the brain. Highly abundant in the retina.

The protein resides in the mitochondrion. Its subcellular location is the mitochondrion membrane. It catalyses the reaction [protein]-peptidylproline (omega=180) = [protein]-peptidylproline (omega=0). In terms of biological role, constitutively inactive PPiase, which becomes active when bound to calmodulin and calcium. Seems to act as a chaperone for BCL2, targets it to the mitochondria and modulates its phosphorylation state. The BCL2/FKBP8/calmodulin/calcium complex probably interferes with the binding of BCL2 to its targets. The active form of FKBP8 may therefore play a role in the regulation of apoptosis. Involved in the inhibition of viral infection by influenza A viruses (IAV). This chain is Peptidyl-prolyl cis-trans isomerase FKBP8 (FKBP8), found in Homo sapiens (Human).